Reading from the N-terminus, the 96-residue chain is MCLGIPGQVVEVGKTITENALVDVCGVKREVNIALVCEGEPDTMIGKWVLVHVGFAMSIVNEQEAQETLNALMAMGEVEDDVSAFLYGEESTAKRA.

Belongs to the HupF/HypC family.

The sequence is that of Frd operon uncharacterized protein C from Proteus vulgaris.